The sequence spans 594 residues: DNA ligase 2 (594 aa).

Residue Glu250 participates in ATP binding. The active-site N6-AMP-lysine intermediate is the Lys252. ATP contacts are provided by Arg257, Arg273, Glu303, Phe343, Arg419, and Lys425.

Belongs to the ATP-dependent DNA ligase family. Mg(2+) serves as cofactor.

It catalyses the reaction ATP + (deoxyribonucleotide)n-3'-hydroxyl + 5'-phospho-(deoxyribonucleotide)m = (deoxyribonucleotide)n+m + AMP + diphosphate.. Functionally, DNA ligase that seals nicks in double-stranded DNA during DNA replication, DNA recombination and DNA repair. In Korarchaeum cryptofilum (strain OPF8), this protein is DNA ligase 2.